Reading from the N-terminus, the 413-residue chain is Monacolin J acid methylbutanoyltransferase (413 aa).

R73 provides a ligand contact to monacolin J. S76 acts as the Acyl-ester intermediate in catalysis. R173, Y188, and Y258 together coordinate monacolin J. G366 is a binding site for 2-methylbutanoate. Monacolin J-binding residues include E388 and W390.

It belongs to the class-A beta-lactamase family. As to quaternary structure, interacts with LovF.

It catalyses the reaction monacolin J carboxylate + (S)-2-methylbutanoyl-[2-methylbutanoate polyketide synthase] = lovastatin carboxylate + holo-[2-methylbutanoate polyketide synthase]. The protein operates within polyketide biosynthesis; lovastatin biosynthesis. In terms of biological role, monacolin J acid methylbutanoyltransferase; part of the gene cluster that mediates the biosynthesis of lovastatin (also known as mevinolin, mevacor or monacolin K), a hypolipidemic inhibitor of (3S)-hydroxymethylglutaryl-coenzyme A (HMG-CoA) reductase (HMGR). The first step in the biosynthesis of lovastatin is the production of dihydromonacolin L acid by the lovastatin nonaketide synthase lovB and the trans-acting enoyl reductase lovC via condensation of one acetyl-CoA unit and 8 malonyl-CoA units. Dihydromonacolin L acid is released from lovB by the thioesterase lovG. Next, dihydromonacolin L acid is oxidized by the dihydromonacolin L monooxygenase lovA twice to form monacolin J acid. The 2-methylbutyrate moiety of lovastatin is synthesized by the lovastatin diketide synthase lovF via condensation of one acetyl-CoA unit and one malonyl-CoA unit. Finally, the covalent attachment of this moiety to monacolin J acid is catalyzed by the transesterase lovD to yield lovastatin. LovD has broad substrate specificity and can also convert monacolin J to simvastatin using alpha-dimethylbutanoyl-S-methyl-3-mercaptopropionate (DMB-S-MMP) as the thioester acyl donor, and can also catalyze the reverse reaction and function as hydrolase in vitro. LovD has much higher activity with LovF-bound 2-methylbutanoate than with free diketide substrates. The polypeptide is Monacolin J acid methylbutanoyltransferase (Aspergillus terreus (strain NIH 2624 / FGSC A1156)).